The primary structure comprises 838 residues: Protein translocase subunit SecA (838 aa).

ATP contacts are provided by residues Q86, 104–108 (GEGKT), and D493. Positions 793-838 (NTQAVSGGEDSGKKKTKKPVVKSNTVKRNDPCPCGSGKKYKNCHGQ) are disordered. Zn(2+) contacts are provided by C824, C826, C835, and H836.

Belongs to the SecA family. Monomer and homodimer. Part of the essential Sec protein translocation apparatus which comprises SecA, SecYEG and auxiliary proteins SecDF. Other proteins may also be involved. Requires Zn(2+) as cofactor.

The protein resides in the cell membrane. It is found in the cytoplasm. It catalyses the reaction ATP + H2O + cellular proteinSide 1 = ADP + phosphate + cellular proteinSide 2.. Its function is as follows. Part of the Sec protein translocase complex. Interacts with the SecYEG preprotein conducting channel. Has a central role in coupling the hydrolysis of ATP to the transfer of proteins into and across the cell membrane, serving as an ATP-driven molecular motor driving the stepwise translocation of polypeptide chains across the membrane. The chain is Protein translocase subunit SecA from Oceanobacillus iheyensis (strain DSM 14371 / CIP 107618 / JCM 11309 / KCTC 3954 / HTE831).